The chain runs to 451 residues: MRLERTSFARRLEGYTEAVSLPAQPVVEGRLLRMVGLTLEAEGLQAAVGSRCNVINESGYHPVQVEAEVMGFSGSKVYLMPVGSLAGIAPGARVVPLPDTGRLPMGMSMLGRVLDGAGRALDGKGGMRAEDWVPMDGPTINPLKRHPISEPLDVGIRSINGLLTVGRGQRLGLFAGTGVGKSVLLGMMTRFTRADIIVVGLIGERGREVKEFIDEILGEEGLKRSVVVASPADDAPLMRLRAAQYCTRIAEYFRDKGKNVLLLMDSLTRYAQAQREIALAIGEPPATKGYPPSVFAKLPKLVERAGNAEAGGGSITAFYTVLSEGDDQQDPIADAARGVLDGHFVLSRRLAEEGHYPAIDIEASISRVMPQVVEAEHLRDAQRFKQLWSRYQQSRDLISVGAYVAGGDPETDLAIARFPVMRQFLRQGLDESESLAESRARLASLLAGGQA.

Residue 175–182 (AGTGVGKS) coordinates ATP.

Belongs to the ATPase alpha/beta chains family.

It localises to the cytoplasm. It catalyses the reaction ATP + H2O + 4 H(+)(in) = ADP + phosphate + 5 H(+)(out). In terms of biological role, probable catalytic subunit of a protein translocase for flagellum-specific export, or a proton translocase involved in local circuits at the flagellum. This Pseudomonas aeruginosa (strain ATCC 15692 / DSM 22644 / CIP 104116 / JCM 14847 / LMG 12228 / 1C / PRS 101 / PAO1) protein is Flagellum-specific ATP synthase (fliI).